We begin with the raw amino-acid sequence, 395 residues long: Small ribosomal subunit protein mS31 (395 aa).

A mitochondrion-targeting transit peptide spans 1–65 (MFPRVSTFLP…IQRYFGTNSV (65 aa)). Disordered stretches follow at residues 70-97 (KDKQ…NTKK) and 175-196 (SELL…DAKR). Residues 183 to 196 (QHEEESRAQRDAKR) show a composition bias toward basic and acidic residues.

The protein belongs to the mitochondrion-specific ribosomal protein mS31 family. As to quaternary structure, component of the mitochondrial small ribosomal subunit (mt-SSU). Mature mammalian 55S mitochondrial ribosomes consist of a small (28S) and a large (39S) subunit. The 28S small subunit contains a 12S ribosomal RNA (12S mt-rRNA) and 30 different proteins. The 39S large subunit contains a 16S rRNA (16S mt-rRNA), a copy of mitochondrial valine transfer RNA (mt-tRNA(Val)), which plays an integral structural role, and 52 different proteins.

It is found in the mitochondrion. The polypeptide is Small ribosomal subunit protein mS31 (MRPS31) (Homo sapiens (Human)).